The following is a 647-amino-acid chain: Threonine--tRNA ligase (647 aa).

Residues 1 to 63 enclose the TGS domain; it reads MYMIQLTFPD…EHDGKIELVM (63 aa). Residues 247 to 544 form a catalytic region; it reads DHRKLGKELD…LIEEYKGAFP (298 aa). The Zn(2+) site is built by Cys-340, His-391, and His-521.

Belongs to the class-II aminoacyl-tRNA synthetase family. In terms of assembly, homodimer. The cofactor is Zn(2+).

The protein resides in the cytoplasm. It carries out the reaction tRNA(Thr) + L-threonine + ATP = L-threonyl-tRNA(Thr) + AMP + diphosphate + H(+). Catalyzes the attachment of threonine to tRNA(Thr) in a two-step reaction: L-threonine is first activated by ATP to form Thr-AMP and then transferred to the acceptor end of tRNA(Thr). Also edits incorrectly charged L-seryl-tRNA(Thr). This chain is Threonine--tRNA ligase, found in Exiguobacterium sp. (strain ATCC BAA-1283 / AT1b).